The chain runs to 202 residues: Glycerol-3-phosphate acyltransferase (202 aa).

4 consecutive transmembrane segments (helical) span residues 1–21, 84–104, 116–136, and 143–163; these read MTLI…FGVL, AVAA…FLHF, ILLG…LAVA, and SLAA…FLGF.

It belongs to the PlsY family. As to quaternary structure, probably interacts with PlsX.

The protein resides in the cell inner membrane. The catalysed reaction is an acyl phosphate + sn-glycerol 3-phosphate = a 1-acyl-sn-glycero-3-phosphate + phosphate. The protein operates within lipid metabolism; phospholipid metabolism. In terms of biological role, catalyzes the transfer of an acyl group from acyl-phosphate (acyl-PO(4)) to glycerol-3-phosphate (G3P) to form lysophosphatidic acid (LPA). This enzyme utilizes acyl-phosphate as fatty acyl donor, but not acyl-CoA or acyl-ACP. In Nitrosospira multiformis (strain ATCC 25196 / NCIMB 11849 / C 71), this protein is Glycerol-3-phosphate acyltransferase.